The chain runs to 180 residues: Crossover junction endodeoxyribonuclease RuvC (180 aa).

Catalysis depends on residues Asp7, Glu66, and Asp138. Asp7, Glu66, and Asp138 together coordinate Mg(2+).

The protein belongs to the RuvC family. As to quaternary structure, homodimer which binds Holliday junction (HJ) DNA. The HJ becomes 2-fold symmetrical on binding to RuvC with unstacked arms; it has a different conformation from HJ DNA in complex with RuvA. In the full resolvosome a probable DNA-RuvA(4)-RuvB(12)-RuvC(2) complex forms which resolves the HJ. It depends on Mg(2+) as a cofactor.

Its subcellular location is the cytoplasm. The enzyme catalyses Endonucleolytic cleavage at a junction such as a reciprocal single-stranded crossover between two homologous DNA duplexes (Holliday junction).. In terms of biological role, the RuvA-RuvB-RuvC complex processes Holliday junction (HJ) DNA during genetic recombination and DNA repair. Endonuclease that resolves HJ intermediates. Cleaves cruciform DNA by making single-stranded nicks across the HJ at symmetrical positions within the homologous arms, yielding a 5'-phosphate and a 3'-hydroxyl group; requires a central core of homology in the junction. The consensus cleavage sequence is 5'-(A/T)TT(C/G)-3'. Cleavage occurs on the 3'-side of the TT dinucleotide at the point of strand exchange. HJ branch migration catalyzed by RuvA-RuvB allows RuvC to scan DNA until it finds its consensus sequence, where it cleaves and resolves the cruciform DNA. This chain is Crossover junction endodeoxyribonuclease RuvC, found in Burkholderia orbicola (strain MC0-3).